A 213-amino-acid polypeptide reads, in one-letter code: Small ribosomal subunit protein uS4 (213 aa).

In terms of domain architecture, S4 RNA-binding spans 97-165 (RRLDNVVYRM…AKEQLRIKNA (69 aa)).

This sequence belongs to the universal ribosomal protein uS4 family. Part of the 30S ribosomal subunit. Contacts protein S5. The interaction surface between S4 and S5 is involved in control of translational fidelity.

In terms of biological role, one of the primary rRNA binding proteins, it binds directly to 16S rRNA where it nucleates assembly of the body of the 30S subunit. Its function is as follows. With S5 and S12 plays an important role in translational accuracy. This is Small ribosomal subunit protein uS4 from Psychrobacter sp. (strain PRwf-1).